Reading from the N-terminus, the 127-residue chain is Large ribosomal subunit protein bL12 (127 aa).

The protein belongs to the bacterial ribosomal protein bL12 family. Homodimer. Part of the ribosomal stalk of the 50S ribosomal subunit. Forms a multimeric L10(L12)X complex, where L10 forms an elongated spine to which 2 to 4 L12 dimers bind in a sequential fashion. Binds GTP-bound translation factors.

In terms of biological role, forms part of the ribosomal stalk which helps the ribosome interact with GTP-bound translation factors. Is thus essential for accurate translation. This is Large ribosomal subunit protein bL12 from Rhizobium etli (strain CIAT 652).